A 270-amino-acid chain; its full sequence is HTH-type transcriptional activator AllS (270 aa).

Positions 4 to 61 (LDPETLRTFVSVAETGSFSRAAEKLYKTTATISYRIKLLEDNTGVALFSRTTRSVLLT) constitute an HTH lysR-type domain. The H-T-H motif DNA-binding region spans 21 to 40 (FSRAAEKLYKTTATISYRIK).

It belongs to the LysR transcriptional regulatory family.

Positive regulator essential for the expression of allD operon. Binds to the allD promoter. The polypeptide is HTH-type transcriptional activator AllS (allS) (Klebsiella pneumoniae).